Reading from the N-terminus, the 154-residue chain is Peptide methionine sulfoxide reductase MsrB (154 aa).

The MsrB domain maps to 28–150 (DQQWREQLSE…NSVSLIFNKI (123 aa)). Zn(2+) contacts are provided by C67, C70, C116, and C119. C139 serves as the catalytic Nucleophile.

This sequence belongs to the MsrB Met sulfoxide reductase family. Requires Zn(2+) as cofactor.

The enzyme catalyses L-methionyl-[protein] + [thioredoxin]-disulfide + H2O = L-methionyl-(R)-S-oxide-[protein] + [thioredoxin]-dithiol. This is Peptide methionine sulfoxide reductase MsrB from Vibrio vulnificus (strain CMCP6).